Reading from the N-terminus, the 217-residue chain is 3,4-dihydroxy-2-butanone 4-phosphate synthase (217 aa).

Residues 37–38, Asp-42, 150–154, and Glu-174 each bind D-ribulose 5-phosphate; these read RE and RGGHT. Glu-38 contacts Mg(2+). His-153 is a Mg(2+) binding site.

Belongs to the DHBP synthase family. Homodimer. Mg(2+) is required as a cofactor. It depends on Mn(2+) as a cofactor.

It carries out the reaction D-ribulose 5-phosphate = (2S)-2-hydroxy-3-oxobutyl phosphate + formate + H(+). It participates in cofactor biosynthesis; riboflavin biosynthesis; 2-hydroxy-3-oxobutyl phosphate from D-ribulose 5-phosphate: step 1/1. Catalyzes the conversion of D-ribulose 5-phosphate to formate and 3,4-dihydroxy-2-butanone 4-phosphate. This is 3,4-dihydroxy-2-butanone 4-phosphate synthase from Escherichia fergusonii (strain ATCC 35469 / DSM 13698 / CCUG 18766 / IAM 14443 / JCM 21226 / LMG 7866 / NBRC 102419 / NCTC 12128 / CDC 0568-73).